We begin with the raw amino-acid sequence, 102 residues long: uncharacterized protein (102 aa).

Residues 48-102 (LNDKRKSLGIELSMLELQTGVSISTLNRLFQDPSQVRFTTVFLVAQTLGVSLCAI) form the HTH cro/C1-type domain. A DNA-binding region (H-T-H motif) is located at residues 59–78 (LSMLELQTGVSISTLNRLFQ).

This is an uncharacterized protein from Haemophilus influenzae (strain ATCC 51907 / DSM 11121 / KW20 / Rd).